Consider the following 396-residue polypeptide: Probable sugar efflux transporter (396 aa).

12 helical membrane passes run 15–35 (VLIM…PVAM), 51–71 (GLMM…AMLA), 84–104 (LFII…FWIL), 109–129 (MCIA…VMRI), 137–157 (QALG…LPIG), 168–188 (VTFG…IRLL), 209–229 (PLLL…FTAY), 245–265 (NFAT…SLLF), 276–296 (FIVV…FSTE), 297–317 (TIIA…CIGL), 333–353 (VATA…ALFG), and 365–385 (IGYT…TTHL).

The protein belongs to the major facilitator superfamily. SotB (TC 2.A.1.2) family.

The protein resides in the cell inner membrane. Involved in the efflux of sugars. The physiological role may be the reduction of the intracellular concentration of toxic sugars or sugar metabolites. The chain is Probable sugar efflux transporter from Haemophilus influenzae (strain PittGG).